The chain runs to 800 residues: Protein MICRORCHIDIA 4 (800 aa).

2 disordered regions span residues 1-76 and 552-702; these read MEPI…ARSD and AKRQ…RTLS. The span at 9–18 shows a compositional bias: polar residues; sequence NPVTTSTLST. Residues 36–47 are compositionally biased toward low complexity; that stretch reads ELSSSNEGSELG. Basic and acidic residues-rich tracts occupy residues 559 to 578 and 628 to 641; these read SAKD…EFDP and VSKD…EKGG. Positions 666 to 675 are enriched in acidic residues; sequence NSDDDYDCDS. Residues 699–766 adopt a coiled-coil conformation; it reads RTLSQLEQEN…QASLIDVFAE (68 aa). 2 consecutive short sequence motifs (nuclear localization signal) follow at residues 716–723 and 735–742; these read DKKEEVFL and LRKTLEAE.

Belongs to the MORC ATPase protein family. Homodimer and heterodimer. Component of an RNA-directed DNA methylation (RdDM) complex. Forms homomeric complexes. Mg(2+) is required as a cofactor. Requires Mn(2+) as cofactor.

The protein localises to the nucleus. In terms of biological role, exhibits ATPase activity. Binds DNA/RNA in a non-specific manner and exhibits endonuclease activity. Probably involved in DNA repair. Involved in RNA-directed DNA methylation (RdDM) as a component of the RdDM machinery and required for gene silencing. May also be involved in the regulation of chromatin architecture to maintain gene silencing. Together with MORC7, acts to suppress a wide set of non-methylated protein-coding genes, especially involved in pathogen response. Positive regulator of defense against the oomycete Hyaloperonospora arabidopsidis (Hpa). The chain is Protein MICRORCHIDIA 4 from Arabidopsis thaliana (Mouse-ear cress).